A 107-amino-acid polypeptide reads, in one-letter code: High mobility group protein HMG-I/HMG-Y (107 aa).

Over residues 1-13 the composition is skewed to polar residues; it reads MSESVSKSSQPLA. A disordered region spans residues 1–107; sequence MSESVSKSSQ…ISQESSEEEQ (107 aa). Residue serine 2 is modified to N-acetylserine. An N6-acetyllysine modification is found at lysine 7. Serine 8 is modified (ADP-ribosylserine). Residue serine 9 is modified to ADP-ribosylserine; alternate. Position 9 is a phosphoserine; alternate (serine 9). Lysine 15 carries the post-translational modification N6-acetyllysine; alternate. A Glycyl lysine isopeptide (Lys-Gly) (interchain with G-Cter in SUMO2); alternate cross-link involves residue lysine 15. Residues 15–24 are compositionally biased toward basic and acidic residues; it reads KQEKDGTEKR. A DNA-binding region (a.T hook 1) is located at residues 21–31; it reads TEKRGRGRPRK. Arginine 26 is subject to Asymmetric dimethylarginine; alternate. Omega-N-methylarginine; alternate is present on arginine 26. Arginine 26 carries the symmetric dimethylarginine; alternate modification. Serine 36 is modified (phosphoserine; by HIPK2 and CDC2). The residue at position 39 (threonine 39) is a Phosphothreonine. Residues serine 44 and serine 49 each carry the phosphoserine modification. At threonine 53 the chain carries Phosphothreonine; by HIPK2 and CDC2. DNA-binding regions (a.T hook) lie at residues 53–63 and 78–89; these read TPKRPRGRPKG and TPGRKPRGRPKK. Residues 53–77 are interaction with HIPK2; that stretch reads TPKRPRGRPKGSKNKGTAKTRKVTT. Residues 55–74 show a composition bias toward basic residues; that stretch reads KRPRGRPKGSKNKGTAKTRK. Residues arginine 58 and arginine 60 each carry the asymmetric dimethylarginine; by PRMT6; alternate modification. Arginine 58 and arginine 60 each carry omega-N-methylarginine; by PRMT6; alternate. Threonine 78 is subject to Phosphothreonine; by HIPK2 and CDC2. Positions 93–107 are enriched in acidic residues; it reads EEEEGISQESSEEEQ. Residues serine 99, serine 102, and serine 103 each carry the phosphoserine modification.

It belongs to the HMGA family. Interacts with HIPK2. In terms of processing, isoforms HMG-I and HMG-Y can be phosphorylated by HIPK2. Phosphorylation may modulate DNA-binding affinity. Methylation at Arg-58 is mutually exclusive with methylation at Arg-60.

Its subcellular location is the nucleus. It localises to the chromosome. In terms of biological role, HMG-I/Y bind preferentially to the minor groove of A+T rich regions in double-stranded DNA. It is suggested that these proteins could function in nucleosome phasing and in the 3'-end processing of mRNA transcripts. They are also involved in the transcription regulation of genes containing, or in close proximity to A+T-rich regions. This Rattus norvegicus (Rat) protein is High mobility group protein HMG-I/HMG-Y (Hmga1).